The sequence spans 185 residues: MIKDILNKSEEKMLKSISVLKKDLGSMKAGKANPAMLDRVNVEYYGSETPINQLANVSSPEPRVLLIQPWDKNSLKDIEKAILQSDLGLNPSNDGSVIRLIIPELTEETRKDIVKKVKKIGEESKIAIRSIRREGNDKIKNLKKNNDITEDEAKEGESSVQKITDKYITEIDNIVSAKEKEVMSV.

This sequence belongs to the RRF family.

It localises to the cytoplasm. In terms of biological role, responsible for the release of ribosomes from messenger RNA at the termination of protein biosynthesis. May increase the efficiency of translation by recycling ribosomes from one round of translation to another. The polypeptide is Ribosome-recycling factor (Clostridium novyi (strain NT)).